The sequence spans 421 residues: O-acetyl-L-homoserine sulfhydrylase 1 (421 aa).

An N6-(pyridoxal phosphate)lysine modification is found at lysine 206.

This sequence belongs to the trans-sulfuration enzymes family. Homotetramer. Requires pyridoxal 5'-phosphate as cofactor.

It carries out the reaction O-acetyl-L-homoserine + hydrogen sulfide = L-homocysteine + acetate. Its pathway is amino-acid biosynthesis; L-methionine biosynthesis via de novo pathway; L-homocysteine from O-acetyl-L-homoserine: step 1/1. Inhibited by the carbonyl reagents hydroxylamine and phenylhydrazine. Also inhibited by methionine and propargylglycine. Its function is as follows. Catalyzes the conversion of O-acetyl-L-homoserine (OAH) into homocysteine in the methionine biosynthesis pathway. Has weak activity with O-acetyl-L-serine, O-phospho-L-serine, L-serine, O-succinyl-L-homoserine and L-homoserine. Shows low CTT beta-lyase activity and very low CTT gamma-synthase activity. The polypeptide is O-acetyl-L-homoserine sulfhydrylase 1 (Thermus thermophilus (strain ATCC 27634 / DSM 579 / HB8)).